The following is a 2522-amino-acid chain: Neurogenic locus notch homolog protein 1 (2522 aa).

The first 19 residues, 1 to 19 (MYRIGLLVLIWSLLGLAQG), serve as a signal peptide directing secretion. 4 EGF-like domains span residues 20–57 (LRCTQTAEMCLNGGRCEMTPGGTGVCLCSSSYFGERCQ), 58–99 (YPNP…KVCL), 102–140 (VDNACVNNPCRNGGTCELLSSVSDYRCRCPPGWTGDSCQ), and 141–177 (QADPCASNPCANGGKCLPFETQYICKCPSGFHGATCK). Over 20 to 1730 (LRCTQTAEMC…ETAKPPPPLY (1711 aa)) the chain is Extracellular. 33 disulfide bridges follow: C22–C35, C29–C45, C47–C56, C62–C74, C68–C87, C89–C98, C106–C117, C111–C128, C130–C139, C145–C156, C150–C165, C167–C176, C183–C194, C188–C203, C205–C214, C221–C232, C226–C242, C244–C253, C260–C271, C265–C280, C282–C291, C298–C311, C305–C320, C322–C331, C338–C349, C343–C358, C360–C369, C375–C386, C380–C397, C399–C408, C415–C428, C422–C437, and C439–C448. In terms of domain architecture, EGF-like 5; calcium-binding spans 179-215 (DINECSQNPCRNGGQCLNEFGSYRCNCQNRFTGRNCE). An EGF-like 6 domain is found at 217–254 (PYVPCNPSPCLNGGTCRQTDDTSYECTCLPGFSGQNCE). The O-linked (Fuc...) threonine; alternate glycan is linked to T231. Residue T231 is glycosylated (O-linked (GalNAc...) threonine; alternate). Residues 256 to 292 (NIDDCPSNNCRNGGTCVDGVNTYNCQCPPDWTGQYCT) form the EGF-like 7; calcium-binding domain. Residues 294 to 332 (DVDECQLMPNACQNGGTCHNTYGGYNCVCVNGWTGEDCS) enclose the EGF-like 8; calcium-binding domain. Residues 334 to 370 (NIDDCANAACHSGATCHDRVASFFCECPHGRTGLLCH) enclose the EGF-like 9; calcium-binding domain. The region spanning 371–409 (LDNACISNPCNEGSNCDTNPVNGKAICTCPPGYTGPACN) is the EGF-like 10 domain. The 39-residue stretch at 411–449 (DVDECSLGANPCEHGGRCTNTLGSFQCNCPQGYAGPRCE) folds into the EGF-like 11; calcium-binding domain. The Ca(2+) site is built by T431 and S434. S434 carries O-linked (Glc...) serine glycosylation. Ca(2+)-binding residues include D451, V452, and E454. An EGF-like 12; calcium-binding domain is found at 451 to 487 (DVNECLSNPCQNDATCLDQIGEFQCICMPGYEGLYCE). Cystine bridges form between C455/C466, C460/C475, and C477/C486. An O-linked (Glc...) serine glycan is attached at S457. The O-linked (Fuc...) threonine glycan is linked to T465. Ca(2+) contacts are provided by D468 and Q469. Ca(2+) is bound by residues N489, I490, and E492. The EGF-like 13; calcium-binding domain occupies 489–525 (NIDECASNPCLHNGKCVDKINEFHCECPTGFNGNLCQ). 75 cysteine pairs are disulfide-bonded: C493–C504, C498–C513, C515–C524, C531–C542, C536–C551, C553–C562, C569–C579, C574–C588, C590–C599, C606–C617, C611–C626, C628–C637, C644–C654, C649–C663, C665–C674, C681–C692, C686–C701, C703–C712, C719–C729, C724–C738, C740–C749, C756–C767, C761–C776, C778–C787, C794–C805, C799–C814, C816–C825, C832–C843, C837–C854, C856–C865, C872–C883, C877–C892, C894–C903, C910–C921, C915–C930, C932–C941, C948–C959, C953–C968, C970–C979, C986–C997, C991–C1006, C1008–C1017, C1024–C1035, C1029–C1044, C1046–C1055, C1062–C1073, C1067–C1082, C1084–C1093, C1100–C1121, C1115–C1130, C1132–C1141, C1148–C1159, C1153–C1168, C1170–C1179, C1186–C1197, C1191–C1206, C1208–C1217, C1224–C1243, C1237–C1252, C1254–C1263, C1270–C1283, C1275–C1292, C1294–C1303, C1310–C1321, C1315–C1333, C1335–C1344, C1351–C1362, C1356–C1371, C1373–C1382, C1390–C1401, C1395–C1412, C1414–C1423, C1447–C1470, C1452–C1465, and C1461–C1477. S495 carries O-linked (Glc...) serine glycosylation. Ca(2+)-binding residues include D506 and K507. Residues 527 to 563 (DVDECASTPCKNGAKCLDGPNSYTCQCTEGFTGRHCE) enclose the EGF-like 14; calcium-binding domain. Residues 565–600 (DINECIPDPCHYGTCKDGIATFTCLCRPGYTGRLCD) form the EGF-like 15; calcium-binding domain. The EGF-like 16; calcium-binding domain occupies 602 to 638 (DINECLSQPCQNGGQCTDRENGYICTCPKGTTGVNCE). Residues 640-675 (NLDDCASNPCDYGKCIDKIDGYECTCEPGYTGKMCN) enclose the EGF-like 17; calcium-binding domain. Positions 677-713 (NIDECASNPCRNGGTCKDKINGFTCVCPDGYHDHMCL) constitute an EGF-like 18; calcium-binding domain. One can recognise an EGF-like 19; calcium-binding domain in the interval 715-750 (EVNECNSNPCIHGTCHDGINGYKCDCDAGWSGSNCD). The 37-residue stretch at 752–788 (NNNECESNPCMNGGTCKDMTGAYICTCRAGFSGPNCQ) folds into the EGF-like 20; calcium-binding domain. Residues 790-826 (NINECASNPCLNRGTCIDDVAGYKCNCMLPYTGAICE) form the EGF-like 21; calcium-binding domain. Residues 828 to 866 (VLAPCSGSPCKNGGRCKESEDYETFSCECPPGWQGQTCE) enclose the EGF-like 22 domain. In terms of domain architecture, EGF-like 23; calcium-binding spans 868–904 (DMNECVNRPCRNGAMCQNTNGSYKCNCKPGYAGRHCE). A glycan (N-linked (GlcNAc...) asparagine) is linked at N887. In terms of domain architecture, EGF-like 24; calcium-binding spans 906–942 (DIDDCQPNPCHNGGSCSDGINMFFCNCPAGFRGPKCE). The 37-residue stretch at 944 to 980 (DINECASNPCKNGANCTDCVNSYTCTCQPGFSGIHCE) folds into the EGF-like 25; calcium-binding domain. Residue N958 is glycosylated (N-linked (GlcNAc...) asparagine). In terms of domain architecture, EGF-like 26 spans 982 to 1018 (NTPDCTESSCFNGGTCIDGINTFSCQCPPGFTGNYCQ). The 37-residue stretch at 1020–1056 (DINECDSKPCLNGGTCQDSYGAYKCTCPQGYTGLNCQ) folds into the EGF-like 27; calcium-binding domain. 2 consecutive EGF-like domains span residues 1058–1094 (LVRWCDSSPCKNGGKCWQTNNFYRCECKSGWTGVYCD) and 1096–1142 (PSVS…SYCE). Positions 1144–1180 (QVDECSPNPCQNGATCTDYLGGYSCECVAGYHGVNCS) constitute an EGF-like 30; calcium-binding domain. Residue N1178 is glycosylated (N-linked (GlcNAc...) asparagine). Residues 1182 to 1218 (EINECLSHPCHNGGTCIDLINTYKCSCPRGTQGVHCE) form the EGF-like 31; calcium-binding domain. Residues 1220 to 1264 (NVDDCTPFYDSVSLEPKCFNNGKCFDRVGGYNCICPPGFVGERCE) enclose the EGF-like 32; calcium-binding domain. 4 consecutive EGF-like domains span residues 1266–1304 (DVNECLSNPCDPRGTQNCIQLVNDYRCECRQGFTGRRCD), 1306–1345 (VVDGCKGLPCRNGGTCAVASNTERGFICKCPPGFDGATCE), 1347–1383 (DARTCGNLRCQNGGTCISVLKSSKCVCSEGYTGATCQ), and 1386–1424 (VVSPCASRPCYNGGTCQFSPEEPFFQCFCPTNFNGLFCH). T1400 carries O-linked (Fuc...) threonine; alternate glycosylation. T1400 carries an O-linked (GalNAc...) threonine; alternate glycan. 3 LNR repeats span residues 1447 to 1487 (CENE…PWKN), 1488 to 1529 (CTQS…CNPL), and 1530 to 1564 (YDQYCRDHFQDGHCDQGCNNAECEWDGLDCDNMPE). Residues N1458, D1473, and D1476 each contribute to the Ca(2+) site. N1487 carries N-linked (GlcNAc...) asparagine glycosylation. Cystine bridges form between C1488-C1512, C1494-C1507, C1503-C1519, C1534-C1547, and C1543-C1559. Ca(2+) is bound at residue D1500. An N-linked (GlcNAc...) asparagine glycan is attached at N1508. The Ca(2+) site is built by D1515, D1518, D1540, D1555, and D1558. The N-linked (GlcNAc...) asparagine glycan is linked to N1584. The helical transmembrane segment at 1731–1751 (AMFSMLVIPLLIIFVIMVVIV) threads the bilayer. Topologically, residues 1752-2522 (NKKRRREHGQ…QRTHIPEAFK (771 aa)) are cytoplasmic. 6 ANK repeats span residues 1877-1920 (DGFT…QLHN), 1925-1954 (TGETALHLAARYARADAAKRLLESSADANV), 1958-1988 (MGRTPLHAAVAADAQGVFQILIRNRATDLDA), 1992-2021 (DGTTPLILAARLAVEGMVEELINAHADVNA), 2025-2054 (FGKSALHWAAAVNNVDAAAVLLKSSANKDM), and 2058-2087 (KEETPLFLAAREGSYETAKVLLDHYANRDI). Disordered regions lie at residues 2146–2229 (MKPS…MPLN), 2365–2404 (LMQAQQMQQQQNLQLHQSVQQQQHQNSNATSTHIGSPFCS), and 2449–2522 (LTPP…EAFK). Over residues 2184–2200 (SLLDSGSSGVLSPVDSL) the composition is skewed to low complexity. Residues 2218–2229 (SPFQQSPSMPLN) show a composition bias toward polar residues. Over residues 2365 to 2390 (LMQAQQMQQQQNLQLHQSVQQQQHQN) the composition is skewed to low complexity. Polar residues-rich tracts occupy residues 2391–2404 (SNATSTHIGSPFCS) and 2449–2469 (LTPPSQHSYSSPMDNTPSHQL). Low complexity predominate over residues 2479 to 2494 (PSPESPDQWSSSSPHS). Positions 2495 to 2514 (NMSDWSEGISSPPTSMQPQR) are enriched in polar residues.

This sequence belongs to the NOTCH family. In terms of processing, O-glycosylated on the EGF-like domains. Contains both O-linked fucose and O-linked glucose. O-linked glycosylation by galnt11 is involved in determination of left/right symmetry: glycosylation promotes activation of notch1, possibly by promoting cleavage by adam17, modulating the balance between motile and immotile (sensory) cilia at the left-right organiser (LRO). Synthesized in the endoplasmic reticulum as an inactive form which is proteolytically cleaved by a furin-like convertase in the trans-Golgi network before it reaches the plasma membrane to yield an active, ligand-accessible form. Cleavage results in a C-terminal fragment N(TM) and a N-terminal fragment N(EC). Following ligand binding, it is cleaved by adam17 to yield a membrane-associated intermediate fragment called notch extracellular truncation (NEXT). Following endocytosis, this fragment is then cleaved by presenilin dependent gamma-secretase to release a Notch-derived peptide containing the intracellular domain (NICD) from the membrane.

The protein resides in the cell membrane. Its subcellular location is the nucleus. Its function is as follows. Functions as a receptor for membrane-bound ligands Jagged-1 (JAG1), Jagged-2 (JAG2) and Delta-1 (DLL1) to regulate cell-fate determination. Upon ligand activation through the released notch intracellular domain (NICD) it forms a transcriptional activator complex with RBPJ/RBPSUH and activates genes of the enhancer of split locus. Affects the implementation of differentiation, proliferation and apoptotic programs. Involved in angiogenesis; negatively regulates endothelial cell proliferation and migration and angiogenic sprouting. Involved in the maturation of both CD4(+) and CD8(+) cells in the thymus. Important for follicular differentiation and possibly cell fate selection within the follicle. During cerebellar development, functions as a receptor for neuronal DNER and is involved in the differentiation of Bergmann glia. Represses neuronal and myogenic differentiation. May play an essential role in postimplantation development, probably in some aspect of cell specification and/or differentiation. May be involved in mesoderm development, somite formation and neurogenesis. Involved in determination of left/right symmetry by modulating the balance between motile and immotile (sensory) cilia at the left-right organiser (LRO). The sequence is that of Neurogenic locus notch homolog protein 1 (notch1) from Xenopus tropicalis (Western clawed frog).